A 124-amino-acid chain; its full sequence is Small ribosomal subunit protein uS11 (124 aa).

It belongs to the universal ribosomal protein uS11 family. Part of the 30S ribosomal subunit. Interacts with proteins S7 and S18. Binds to IF-3.

In terms of biological role, located on the platform of the 30S subunit, it bridges several disparate RNA helices of the 16S rRNA. Forms part of the Shine-Dalgarno cleft in the 70S ribosome. The sequence is that of Small ribosomal subunit protein uS11 from Anaplasma phagocytophilum (strain HZ).